The sequence spans 64 residues: uncharacterized protein (64 aa).

This is an uncharacterized protein from Saccharomyces cerevisiae (strain ATCC 204508 / S288c) (Baker's yeast).